Here is a 307-residue protein sequence, read N- to C-terminus: Ornithine carbamoyltransferase (307 aa).

Residues 53–56, Gln-80, Arg-104, and 131–134 each bind carbamoyl phosphate; these read STRT and HPCQ. Residues Asn-162, Asp-220, and 224–225 contribute to the L-ornithine site; that span reads SM. Carbamoyl phosphate is bound by residues 260–261 and Arg-288; that span reads CL.

The protein belongs to the aspartate/ornithine carbamoyltransferase superfamily. OTCase family.

It is found in the cytoplasm. It carries out the reaction carbamoyl phosphate + L-ornithine = L-citrulline + phosphate + H(+). The protein operates within amino-acid biosynthesis; L-arginine biosynthesis; L-arginine from L-ornithine and carbamoyl phosphate: step 1/3. Functionally, reversibly catalyzes the transfer of the carbamoyl group from carbamoyl phosphate (CP) to the N(epsilon) atom of ornithine (ORN) to produce L-citrulline. This chain is Ornithine carbamoyltransferase, found in Nitrosomonas europaea (strain ATCC 19718 / CIP 103999 / KCTC 2705 / NBRC 14298).